Reading from the N-terminus, the 359-residue chain is Peptide chain release factor 1 (359 aa).

The residue at position 235 (glutamine 235) is an N5-methylglutamine. Residues 282–307 show a composition bias toward basic and acidic residues; it reads RQRADSERSADRKSQVGSGDRSERIR. The segment at 282–309 is disordered; the sequence is RQRADSERSADRKSQVGSGDRSERIRTY.

The protein belongs to the prokaryotic/mitochondrial release factor family. Post-translationally, methylated by PrmC. Methylation increases the termination efficiency of RF1.

It localises to the cytoplasm. Its function is as follows. Peptide chain release factor 1 directs the termination of translation in response to the peptide chain termination codons UAG and UAA. The protein is Peptide chain release factor 1 of Allorhizobium ampelinum (strain ATCC BAA-846 / DSM 112012 / S4) (Agrobacterium vitis (strain S4)).